Consider the following 302-residue polypeptide: Potassium/proton antiporter CemA (302 aa).

The next 4 helical transmembrane spans lie at 55–75 (VFVS…ITFL), 187–207 (FVSF…IIIL), 225–247 (FLLI…ELFL), and 262–282 (FIFL…KYWI).

Belongs to the CemA family.

Its subcellular location is the plastid. The protein resides in the chloroplast inner membrane. The catalysed reaction is K(+)(in) + H(+)(out) = K(+)(out) + H(+)(in). Contributes to K(+)/H(+) antiport activity by supporting proton efflux to control proton extrusion and homeostasis in chloroplasts in a light-dependent manner to modulate photosynthesis. Prevents excessive induction of non-photochemical quenching (NPQ) under continuous-light conditions. Indirectly promotes efficient inorganic carbon uptake into chloroplasts. The polypeptide is Potassium/proton antiporter CemA (Tupiella akineta (Green alga)).